The primary structure comprises 316 residues: Probable cell division protein WhiA (316 aa).

The segment at residues 275–309 (TLKELGEMVSSGKISKSGINHRLRKLDEIAEQLRS) is a DNA-binding region (H-T-H motif).

The protein belongs to the WhiA family.

Involved in cell division and chromosome segregation. This chain is Probable cell division protein WhiA, found in Bacillus licheniformis (strain ATCC 14580 / DSM 13 / JCM 2505 / CCUG 7422 / NBRC 12200 / NCIMB 9375 / NCTC 10341 / NRRL NRS-1264 / Gibson 46).